The following is a 297-amino-acid chain: Homoserine kinase (297 aa).

82 to 92 (PVSRGLGSSAA) contributes to the ATP binding site.

It belongs to the GHMP kinase family. Homoserine kinase subfamily.

It localises to the cytoplasm. The enzyme catalyses L-homoserine + ATP = O-phospho-L-homoserine + ADP + H(+). It functions in the pathway amino-acid biosynthesis; L-threonine biosynthesis; L-threonine from L-aspartate: step 4/5. Catalyzes the ATP-dependent phosphorylation of L-homoserine to L-homoserine phosphate. The protein is Homoserine kinase of Clostridium botulinum (strain Loch Maree / Type A3).